The following is a 93-amino-acid chain: Small ribosomal subunit protein uS19 (93 aa).

It belongs to the universal ribosomal protein uS19 family.

Protein S19 forms a complex with S13 that binds strongly to the 16S ribosomal RNA. This chain is Small ribosomal subunit protein uS19, found in Campylobacter concisus (strain 13826).